A 442-amino-acid chain; its full sequence is Trigger factor (442 aa).

Residues Gly162–Thr247 enclose the PPIase FKBP-type domain.

This sequence belongs to the FKBP-type PPIase family. Tig subfamily.

It localises to the cytoplasm. It catalyses the reaction [protein]-peptidylproline (omega=180) = [protein]-peptidylproline (omega=0). Involved in protein export. Acts as a chaperone by maintaining the newly synthesized protein in an open conformation. Functions as a peptidyl-prolyl cis-trans isomerase. In Rickettsia canadensis (strain McKiel), this protein is Trigger factor.